Here is a 415-residue protein sequence, read N- to C-terminus: Putative F-box/FBD/LRR-repeat protein At3g49040 (415 aa).

Residues 10-58 (EDRISELHEALLVHIMSSLPTKTVVATSVLSKRWRHVWKTVQNLKFVSK) form the F-box domain. LRR repeat units lie at residues 60-86 (HQTF…DLEF), 87-114 (SNQL…VLDL), 143-170 (TLTL…HLYK), 171-196 (VHFY…IVHR), and 213-241 (RLTI…NIRR). The region spanning 272–377 (ILESLTSAKR…TSLKKATFST (106 aa)) is the FBD domain.

This chain is Putative F-box/FBD/LRR-repeat protein At3g49040, found in Arabidopsis thaliana (Mouse-ear cress).